A 160-amino-acid polypeptide reads, in one-letter code: Cytochrome b6-f complex subunit 4 (160 aa).

Transmembrane regions (helical) follow at residues 36–56 (LLYI…GLAV), 95–115 (LLGV…PFLE), and 131–151 (TVFL…TLPI).

Belongs to the cytochrome b family. PetD subfamily. In terms of assembly, the 4 large subunits of the cytochrome b6-f complex are cytochrome b6, subunit IV (17 kDa polypeptide, petD), cytochrome f and the Rieske protein, while the 4 small subunits are petG, petL, petM and petN. The complex functions as a dimer.

Its subcellular location is the plastid. It localises to the chloroplast thylakoid membrane. Its function is as follows. Component of the cytochrome b6-f complex, which mediates electron transfer between photosystem II (PSII) and photosystem I (PSI), cyclic electron flow around PSI, and state transitions. This is Cytochrome b6-f complex subunit 4 from Lotus japonicus (Lotus corniculatus var. japonicus).